The primary structure comprises 301 residues: Ornithine carbamoyltransferase (301 aa).

Carbamoyl phosphate contacts are provided by residues 53-56 (STRT), Q80, R104, and 131-134 (HPCQ). L-ornithine-binding positions include N162, D221, and 225 to 226 (SI). Carbamoyl phosphate is bound by residues 260–261 (CL) and R288.

The protein belongs to the aspartate/ornithine carbamoyltransferase superfamily. OTCase family.

It localises to the cytoplasm. The enzyme catalyses carbamoyl phosphate + L-ornithine = L-citrulline + phosphate + H(+). It participates in amino-acid biosynthesis; L-arginine biosynthesis; L-arginine from L-ornithine and carbamoyl phosphate: step 1/3. Functionally, reversibly catalyzes the transfer of the carbamoyl group from carbamoyl phosphate (CP) to the N(epsilon) atom of ornithine (ORN) to produce L-citrulline. The sequence is that of Ornithine carbamoyltransferase from Cenarchaeum symbiosum (strain A).